A 4218-amino-acid chain; its full sequence is Protein Obscurin (4218 aa).

In terms of domain architecture, SH3 spans 3-71 (AVADIVFVSR…PIDILEFNPT (69 aa)). The DH domain maps to 86 to 264 (RKLTILRELV…LSVPSRAYDN (179 aa)). Positions 439 to 466 (SKETKERLQHEQQELLKLEQEAIELYKK) form a coiled coil. Disordered regions lie at residues 465-592 (KKQQ…SHSK), 684-703 (SLRDGDTAPAGGSPGRQQGY), 728-750 (SGANQHLQQSGPPPPPIPPNFTR), and 923-1010 (RYET…EDRP). 2 stretches are compositionally biased toward low complexity: residues 466–490 (KQQSSKSVSSKTESVEITSSQVKSS) and 505–517 (AQVKEVTPVKVVS). Basic and acidic residues predominate over residues 578 to 592 (KEVRKEVPPSASHSK). The segment covering 923–935 (RYETKTRDYDRGT) has biased composition (basic and acidic residues). Residues 936 to 948 (SYDSTVERSQYGI) are compositionally biased toward polar residues. Composition is skewed to basic and acidic residues over residues 950-962 (SRRDRSSVDKVEA) and 972-986 (TESRAASRAESRAES). Low complexity predominate over residues 987-996 (RASYSVAESR). Ig-like C2-type domains are found at residues 1017–1103 (PVVV…TTVS), 1152–1298 (PRVK…AELS), 1313–1400 (PTLV…SSIN), 1504–1594 (PVIV…TQLL), 1599–1689 (PEFT…CVVT), 1694–1785 (PKVK…CKVA), 1815–1906 (PEIV…LSLS), 2018–2107 (PEIS…FNLA), 2113–2214 (PTFI…FKLA), 2220–2305 (PSFV…EKVA), 2318–2409 (PKFL…VEIV), 2415–2505 (PVFV…AKLY), 2519–2609 (PQFV…ANVR), 2614–2698 (PPVF…KDIT), and 2716–2792 (PPVF…SCRI). Cys1199 and Cys1282 are joined by a disulfide. Cys2739 and Cys2790 are disulfide-bonded. Residues 2832–2933 (APPPLSEGPI…TYRQKLVPDP (102 aa)) enclose the Fibronectin type-III 1 domain. Positions 3186 to 3440 (YDIGDELGRG…VKTALKHPWF (255 aa)) constitute a Protein kinase 1 domain. ATP-binding residues include Gly3198, Lys3215, Glu3260, Ala3262, Glu3266, Lys3310, and Asp3326. The Ig-like C2-type 16 domain maps to 3654–3738 (PFFREKPQTI…ARNKVGQTVA (85 aa)). The Fibronectin type-III 2 domain occupies 3750-3843 (APDSPEISAN…IPVSASTVGG (94 aa)). One can recognise a Protein kinase 2 domain in the interval 3897–4151 (YSFISEIARG…TEDCLEHRWL (255 aa)).

This sequence belongs to the protein kinase superfamily. CAMK Ser/Thr protein kinase family. Interacts with myosin. May interact (via protein kinase domain 1) with ball. May interact (via protein kinase domain 1 or 2) with mask. May interact (via protein kinase domain 2) with Tm1/tropomyosin-1. Expressed in the thoracic muscles including the indirect flight muscles (IFM) (at protein level).

It localises to the cytoplasm. The protein localises to the myofibril. It is found in the sarcomere. Its subcellular location is the m line. Its function is as follows. Structural component of the muscle M line which is involved in assembly and organization of sarcomere. Required for the development and organization of indirect flight muscle sarcomeres by regulating the formation of M line and H zone and the correct assembly of thick and thin filaments in the sarcomere. Lacks serine/threonine-protein kinase activity. This is Protein Obscurin from Drosophila melanogaster (Fruit fly).